Reading from the N-terminus, the 264-residue chain is Accessory gland-specific peptide 26Aa (264 aa).

Residues 1–18 (MNQILLCSPILLLLFTVA) form the signal peptide. The segment at 1 to 138 (MNQILLCSPI…LQQRLLTEQN (138 aa)) is sufficient for promoting ovulation when expressed in females. Asparagine 88, asparagine 122, asparagine 138, and asparagine 145 each carry an N-linked (GlcNAc...) asparagine glycan. Positions 189–219 (LQNTRKSTKPCKKRSSKDSAPPAANQFQEAN) are disordered. Positions 194–203 (KSTKPCKKRS) are enriched in basic residues. A necessary and sufficient for homodimerization region spans residues 219–264 (NVRNTYRNKYLTLLKELSQKINNEIAKVATDVPTETNPSQGNLPTL).

Homodimer. As to quaternary structure, may form a homodimer. In terms of processing, glycosylation. Undergoes several cleavages as it is secreted and is further processed in the recipient female. The precursor molecule is proteolytically cleaved by the seminal metalloprotease Semp1 at Lys-48 to produce CP1-N and CP1-C. Post-translationally, cleaved at Lys-67 by Semp1 to generate CP2-N and CP2-C. Cleavage appears to take place in the mated female genital tract. In terms of processing, cleaved at Lys-117 by Semp1 to generate CP3-N and CP3-C. Cleavage appears to take place in the mated female genital tract. In terms of tissue distribution, produced in the male accessory glands and secreted into seminal fluid (at protein level). Detected in the main cells and secondary cells of the accessory glands of 1 day old males (at protein level). In 5 day old males, confined to the secondary cells and only reappears in the main cells after mating (at protein level). Produced in adult males 3-4 hr after eclosion, levels increase reaching a peak at day 3-5 which is maintained until at least day 10 of adulthood (at protein level). In unmated male adults, levels are maintained for the first 6 days of adulthood and then gradually decrease for at least the next 8 days. In mated females, detected in the genital tract 3 minutes after the start of mating (ASM) and is secreted into the female hemolymph via the posterior vaginal wall 5 minutes ASM (at protein level).

The protein localises to the secreted. It is found in the cytoplasm. Its function is as follows. Male seminal protein which enhances ovulation in female Drosophila by stimulating the release of oocytes by the ovary following mating. Acts by increasing octopamine (OA) neuronal signaling in the female genital tract leading to the postmating relaxation of the oviduct muscles. This activation of the OA signaling pathway is likely to indirectly contribute to the mating-dependent increase in the number of OA synaptic sites in the female reproductive tract. Functionally, male seminal peptide which is able to enhance ovulation in female Drosophila. The chain is Accessory gland-specific peptide 26Aa from Drosophila melanogaster (Fruit fly).